We begin with the raw amino-acid sequence, 490 residues long: MAKKAKKDGRSVEPTGNPILEVKYNDPLFSIAAHPTEPIFVSGLATGHVFCNRYDAERLEERMQAIKDEQKKKSKTSVKTTNAAWWTQVEDITNTDEIVTCWKTKRHKGSCRSVLFDPIESSVGKHLFTVGKDHVVKKANTETGKVLTKTDISKDLSSKDAVTKLCHSTTHPFLLSGTENGHVLVYDSNDLSNKFKVENVHEDAVNHILAMPSVSPYHYLTVGSTTLSHIDIRKGIVTQSDDQEDELLSMSFVPDDDRNDTVLVSHGGGIVTIWKNSKNKLMDQLSRIKVNKEASIDVMISAMDAGDDDMAASVWCGDSDGLVHRVNYKKGKVVETRLHGTADEVGFLDIDYEYRLLTAGMDSMKLWSAEGDDEEEEESEGEESEESEESDEESDESSGEESEGDDGNGSNSEESDSNDEDEVESSDDEKEKEEESTETDHKNIEAESGKQANKRQASQPKSAGENVKKQKLKQTSKLAHSHGIRRFDGL.

7 WD repeats span residues 23 to 64 (KYND…ERMQ), 70 to 112 (QKKK…GSCR), 118 to 155 (PIESSVGKHLFTVGKDHVVKKANTETGKVLTKTDISKD), 157 to 196 (SSKDAVTKLCHSTTHPFLLSGTENGHVLVYDSNDLSNKFK), 242 to 284 (DQED…LMDQ), 286 to 327 (SRIK…HRVN), and 340 to 377 (GTADEVGFLDIDYEYRLLTAGMDSMKLWSAEGDDEEEE). Residues 368-490 (SAEGDDEEEE…SHGIRRFDGL (123 aa)) form a disordered region. 2 stretches are compositionally biased toward acidic residues: residues 370 to 406 (EGDDEEEEESEGEESEESEESDEESDESSGEESEGDD) and 413 to 437 (EESDSNDEDEVESSDDEKEKEEEST). Basic and acidic residues predominate over residues 438-448 (ETDHKNIEAES). A compositionally biased stretch (polar residues) spans 450–461 (KQANKRQASQPK). Residues 469–484 (KQKLKQTSKLAHSHGI) show a composition bias toward basic residues.

The protein belongs to the WD repeat WDR55 family.

The protein localises to the nucleus. It is found in the nucleolus. This is WD repeat-containing protein JIP5 (JIP5) from Meyerozyma guilliermondii (strain ATCC 6260 / CBS 566 / DSM 6381 / JCM 1539 / NBRC 10279 / NRRL Y-324) (Yeast).